A 394-amino-acid chain; its full sequence is E3 ubiquitin-protein ligase RNF149 (394 aa).

The N-terminal stretch at 1–31 (MAARRRPAAGVGARDALAVLALALCTPGVGG) is a signal peptide. 2 N-linked (GlcNAc...) asparagine glycosylation sites follow: N51 and N141. The 106-residue stretch at 66 to 171 (SSLREERQGL…PKGREIFDLV (106 aa)) folds into the PA domain. Residues 197–217 (VVFVAIAFITMMIISLAWLIF) form a helical membrane-spanning segment. The RING-type; atypical zinc finger occupies 265–306 (CAVCIENFKVKDVIRILPCKHIFHRICIDPWLLDHRTCPMCK). The interval 321 to 394 (DTQELPTPEA…SEPQHGGSIC (74 aa)) is disordered. Residue T327 is modified to Phosphothreonine. N339 carries an N-linked (GlcNAc...) asparagine glycan. S341 and S344 each carry phosphoserine. The span at 352-362 (SNLPSSSSSES) shows a compositional bias: low complexity.

It is found in the membrane. The enzyme catalyses S-ubiquitinyl-[E2 ubiquitin-conjugating enzyme]-L-cysteine + [acceptor protein]-L-lysine = [E2 ubiquitin-conjugating enzyme]-L-cysteine + N(6)-ubiquitinyl-[acceptor protein]-L-lysine.. It functions in the pathway protein modification; protein ubiquitination. E3 ubiquitin-protein ligase. Ubiquitinates BRAF, inducing its proteasomal degradation. The sequence is that of E3 ubiquitin-protein ligase RNF149 (Rnf149) from Mus musculus (Mouse).